We begin with the raw amino-acid sequence, 1151 residues long: MSTDVVFDPKRVDKKHNNGLNLPDSLIKRWWSSDVTAVNNSYKNNNVNYNREYPLPDIFRSDPRKYKDVFPLQSHWIMQRYVTKVNEGIYKFLNYFDMKSSTFAPGFNKKEKTNYIHRIAKDLAAKANKEEIRNYSRDLINTLINMDGYDKLSPYLNFLIAILSDFINKTPLTIPTDKEWSRPGFNRIMNPGLVKMQNTYDCIKVFAWAHNYEEPKILFDYLGNRVACLTIIAKDPSASTAAENVFISSEIYSVDRYIWAAAPFNTKSSADWLTNTMYGDLTEEITYRFSPCFGGHCISAEEILTRKKVIDLYVNGEYKTIITGEGHPFGTVFDSMGMLRDPTFNGPLKDLPFTFKSIVDGFLHYGLKQKVTGIMVNMPKDDKWDIDRIRDVLLWMFEITTYRDKTITNFFVDQYVDRDDICCVPFQVAIGSNFSEDRKDNNSLVRQPYFMDPKFIKKYETGREDGTTRYNLKFKIEEDDEEDNILSINQEKITVDFSFFYNKLMDGGFMNKMDLCEIIFRTYAKKSPHVYGYFLLRGKAIKTRSDMINLFNGELRFENNSDDIIIGKKIYENGVDQLAEIFKEYNLNTSENMAGRFKQDPERRYITVNKFVKGDRSDSGGGPPPPPPPDEEEYEDIADEEITITPDVTEPVIANERAAITVVQSDIPEIPIEELITEEEEEEEPTPPPPVQTVATVDQPMVEIVPGQNLVPVGESPMSAPDIDLPIPGLPGPQPQIMEVTSGGPIIEEIESPPILPIQPPLPLPAPPTPQEPPKSILQPPKLIVEPKEVVVPTPPVIEQPKTPEEVPKQIVPPSPAVVSPPSPTTIPQEPPTQPSPIPSQPPVNIIPTQVPPRPGIGERPYPFFEPITPDTPAITPPKLVIKKPADEVIVEEPEEEEKPFVIIDEDEKMGEVEVGQGFPEPFSDRLTVDDLPLEDPRFKSEDVDDIMVAIDSQLEELGEGVGGDGDGGAFIIDPTLPPEVFIDIVDKTINVIEKRVATKRKISDDEEAESESARTRTWVRTTPKDFSGLTAATRGPRINITPKKKRKIVVTTEEEEKLLKEPVTESVEDLPSYEEVKLLDESDNEDDELDITSTPEDMETLKQSRAAPIRARRRGVVMDEESPIKPGSQPVDTSDATKISTDTDELTQQE.

Disordered stretches follow at residues 611 to 633 (FVKG…DEEE), 709 to 740 (NLVP…IMEV), 753 to 778 (PPIL…KSIL), 795 to 880 (PPVI…PPKL), and 1060 to 1151 (LKEP…TQQE). Composition is skewed to pro residues over residues 754-773 (PILP…PQEP) and 811-842 (IVPP…PSQP). Positions 867-878 (PITPDTPAITPP) are enriched in low complexity. The segment covering 1082-1091 (ESDNEDDELD) has biased composition (acidic residues). The segment covering 1131-1142 (PVDTSDATKIST) has biased composition (polar residues).

This is an uncharacterized protein from Ostreid herpesvirus 1 (isolate France) (OsHV-1).